The following is a 144-amino-acid chain: MNRHTARELAFKALFGLDFAPEKTLDTLESLWAEKIAEGKIPPEKLVDFSRELVRGVIEKKERLDEIIRRRAIGWDFKRLAKVDKTLLRLALYEMLYRPDIDIPVSIDEAVELAKVYGEEESPKFINGILGYVAEHIDEFWEES.

It belongs to the NusB family.

Its function is as follows. Involved in transcription antitermination. Required for transcription of ribosomal RNA (rRNA) genes. Binds specifically to the boxA antiterminator sequence of the ribosomal RNA (rrn) operons. This chain is Transcription antitermination protein NusB, found in Carboxydothermus hydrogenoformans (strain ATCC BAA-161 / DSM 6008 / Z-2901).